The following is a 142-amino-acid chain: DNA-directed RNA polymerases I, II, and III subunit rpabc3 (142 aa).

A non-specific ssDNA binding region spans residues 16 to 40 (DPDGKKFDRVSRFVCYSENYEMDLQ).

The protein belongs to the eukaryotic RPB8 RNA polymerase subunit family. Component of the RNA polymerase I (Pol I), RNA polymerase II (Pol II) and RNA polymerase III (Pol III) complexes consisting of at least 13, 12 and 17 subunits, respectively. Directly interacts with POLR2A.

The protein localises to the nucleus. It localises to the nucleolus. In terms of biological role, DNA-dependent RNA polymerase catalyzes the transcription of DNA into RNA using the four ribonucleoside triphosphates as substrates. Common component of RNA polymerases I, II and III which synthesize ribosomal RNA precursors, mRNA precursors and many functional non-coding RNAs, and small RNAs, such as 5S rRNA and tRNAs, respectively. The sequence is that of DNA-directed RNA polymerases I, II, and III subunit rpabc3 (polr2h) from Dictyostelium discoideum (Social amoeba).